A 395-amino-acid chain; its full sequence is Aurora kinase A (395 aa).

A disordered region spans residues 1-114 (MDRCKENCVS…QASLQKTEDT (114 aa)). Polar residues-rich tracts occupy residues 29–60 (QIPS…SQAQ) and 84–99 (RLNN…ASGN). S40 and S50 each carry phosphoserine. Residues 100–114 (DSEKEQASLQKTEDT) are compositionally biased toward basic and acidic residues. In terms of domain architecture, Protein kinase spans 124–374 (FDIGRPLGKG…LAEVLEHPWI (251 aa)). Residues K134, K153, and 201 to 204 (LEYA) each bind ATP. D247 (proton acceptor) is an active-site residue. K249 is covalently cross-linked (Glycyl lysine isopeptide (Lys-Gly) (interchain with G-Cter in SUMO2)). ATP contacts are provided by residues 251-252 (EN) and D265. Residues 271 to 284 (HAPSSRRTTMCGTL) are activation segment. Phosphothreonine occurs at positions 278 and 279. The residue at position 333 (S333) is a Phosphoserine; by PKA and PAK. Polar residues predominate over residues 376–385 (ANSSKPPTGH). A disordered region spans residues 376 to 395 (ANSSKPPTGHTSKEPTSKSS). Positions 386 to 395 (TSKEPTSKSS) are enriched in basic and acidic residues.

It belongs to the protein kinase superfamily. Ser/Thr protein kinase family. Aurora subfamily. Part of a complex composed of NEDD9, AURKA and CTTN; within the complex NEDD9 acts as a scaffold protein and is required for complex formation. Identified in a complex with AUNIP and NIN. Interacts with CPEB1, JTB, TACC1, TPX2, PPP2CA, as well as with the protein phosphatase type 1 (PP1) isoforms PPP1CA, PPP1CB and PPP1CC. Also interacts with its substrates ARHGEF2, BORA, KIF2A, PARD3, and p53/TP53. Interaction with BORA promotes phosphorylation of PLK1. Interacts with GADD45A, competing with its oligomerization. Interacts with FBXL7 and CIMAP3. Interacts (via C-terminus) with AUNIP (via C-terminus). Interacts with SIRT2. Interacts with FRY; this interaction facilitates AURKA-mediated PLK1 phosphorylation. Interacts with MYCN; interaction is phospho-independent and triggers AURKA activation; AURKA competes with FBXW7 for binding to unphosphorylated MYCN but not for binding to phosphorylated MYCN. Interacts with HNRNPU. Interacts with AAAS. Interacts with KLHL18 and CUL3. Interacts with FOXP1. Interacts with HDAC6; AURKA-mediated phosphorylation of HDAC6 promotes deacetylation of alpha-tubulin. Activated by phosphorylation at Thr-279; this brings about a change in the conformation of the activation segment. Phosphorylation at Thr-279 varies during the cell cycle and is highest during M phase. Autophosphorylated at Thr-279 upon TPX2 binding. Thr-279 can be phosphorylated by several kinases, including PAK and PKA. Protein phosphatase type 1 (PP1) binds AURKA and inhibits its activity by dephosphorylating Thr-279 during mitosis. Phosphorylation at Ser-333 decreases the kinase activity. PPP2CA controls degradation by dephosphorylating Ser-52 at the end of mitosis. In terms of processing, ubiquitinated by the anaphase-promoting complex (APC), leading to its degradation by the proteasome. Ubiquitinated by CHFR, leading to its degradation by the proteasome. Ubiquitinated by the E3 ubiquitin-protein ligase complex SCF(FBXL7) during mitosis, leading to its degradation by the proteasome. As to expression, detected in embryonic neurons in dorsal root ganglia and brain cortex (at protein level). Highly expressed in testis, in about one third of the seminiferous tubules. Expression is restricted to specific spermatocytes nearing completion of prophase, with levels falling off on transition to elongated spermatids. Highly expressed in the ovary, expression in the oocyte starts around the transition to large growing follicle. Abundant expression is seen in the proliferating granulosa and thecal cells of the growing follicle, and in the young corpus luteum. Very weakly expressed in spleen and intestine.

It localises to the cytoplasm. The protein localises to the cytoskeleton. It is found in the microtubule organizing center. The protein resides in the centrosome. Its subcellular location is the spindle pole. It localises to the centriole. The protein localises to the cell projection. It is found in the neuron projection. The protein resides in the cilium. Its subcellular location is the cilium basal body. It localises to the basolateral cell membrane. The catalysed reaction is L-seryl-[protein] + ATP = O-phospho-L-seryl-[protein] + ADP + H(+). The enzyme catalyses L-threonyl-[protein] + ATP = O-phospho-L-threonyl-[protein] + ADP + H(+). With respect to regulation, activation of CDK1, appears to be an upstream event of AURKA activation. Phosphatase inhibitor-2 (PPP1R2) and TPX2 act also as activators. Inactivated by the G2 checkpoint. Inhibited by GADD45A and p53/TP53, and through dephosphorylation by protein phosphatase type 1 (PP1). MLN8054 is also a potent and selective inhibitor. Activated during the early phase of cilia disassembly in the presence of CIMAP3. Inhibited by the small molecule inhibitor VX-680. Its function is as follows. Mitotic serine/threonine kinase that contributes to the regulation of cell cycle progression. Associates with the centrosome and the spindle microtubules during mitosis and plays a critical role in various mitotic events including the establishment of mitotic spindle, centrosome duplication, centrosome separation as well as maturation, chromosomal alignment, spindle assembly checkpoint, and cytokinesis. Required for normal spindle positioning during mitosis and for the localization of NUMA1 and DCTN1 to the cell cortex during metaphase. Required for initial activation of CDK1 at centrosomes. Phosphorylates numerous target proteins, including ARHGEF2, BORA, BRCA1, CDC25B, DLGP5, HDAC6, KIF2A, LATS2, NDEL1, PARD3, PPP1R2, PLK1, RASSF1, TACC3, p53/TP53 and TPX2. Phosphorylates MCRS1 which is required for MCRS1-mediated kinetochore fiber assembly and mitotic progression. Regulates KIF2A tubulin depolymerase activity. Required for normal axon formation. Plays a role in microtubule remodeling during neurite extension. Important for microtubule formation and/or stabilization. Also acts as a key regulatory component of the p53/TP53 pathway, and particularly the checkpoint-response pathways critical for oncogenic transformation of cells, by phosphorylating and destabilizing p53/TP53. Phosphorylates its own inhibitors, the protein phosphatase type 1 (PP1) isoforms, to inhibit their activity. Inhibits cilia outgrowth. Required for cilia disassembly via phosphorylation of HDAC6 and subsequent deacetylation of alpha-tubulin. Regulates protein levels of the anti-apoptosis protein BIRC5 by suppressing the expression of the SCF(FBXL7) E3 ubiquitin-protein ligase substrate adapter FBXL7 through the phosphorylation of the transcription factor FOXP1. The protein is Aurora kinase A (Aurka) of Mus musculus (Mouse).